A 470-amino-acid chain; its full sequence is 3-isopropylmalate dehydratase large subunit (470 aa).

Cysteine 349, cysteine 409, and cysteine 412 together coordinate [4Fe-4S] cluster.

This sequence belongs to the aconitase/IPM isomerase family. LeuC type 1 subfamily. As to quaternary structure, heterodimer of LeuC and LeuD. [4Fe-4S] cluster serves as cofactor.

It catalyses the reaction (2R,3S)-3-isopropylmalate = (2S)-2-isopropylmalate. It functions in the pathway amino-acid biosynthesis; L-leucine biosynthesis; L-leucine from 3-methyl-2-oxobutanoate: step 2/4. Catalyzes the isomerization between 2-isopropylmalate and 3-isopropylmalate, via the formation of 2-isopropylmaleate. In Koribacter versatilis (strain Ellin345), this protein is 3-isopropylmalate dehydratase large subunit.